Consider the following 299-residue polypeptide: Small ribosomal subunit protein uS2 (299 aa).

The interval 227 to 299 (SERKSEKSTK…DKAKASNEEE (73 aa)) is disordered.

It belongs to the universal ribosomal protein uS2 family.

The protein is Small ribosomal subunit protein uS2 of Christiangramia forsetii (strain DSM 17595 / CGMCC 1.15422 / KT0803) (Gramella forsetii).